Consider the following 120-residue polypeptide: Guanidine hydrolase-activating protein A (120 aa).

Positions 2, 3, and 41 each coordinate Ni(2+). Cys-74, Cys-77, Cys-91, and Cys-94 together coordinate Zn(2+).

The protein belongs to the HypA/HybF family.

In terms of biological role, involved in the maturation of the nickel-dependent guanidine hydrolase GdmH. Required for nickel insertion into the metal center of GdmH. Seems to be required only for GdmH activation and not for activity. The sequence is that of Guanidine hydrolase-activating protein A from Synechocystis sp. (strain ATCC 27184 / PCC 6803 / Kazusa).